A 609-amino-acid chain; its full sequence is Laccase-1 (609 aa).

The first 20 residues, 1 to 20 (MYLSTVLFPLLALNLGLSHA), serve as a signal peptide directing secretion. Residues 45–141 (VFTNGEYPGP…DGQVGAMYIR (97 aa)) form the Plastocyanin-like 1 domain. N-linked (GlcNAc...) asparagine glycosylation is present at asparagine 75. Residues histidine 79, histidine 81, histidine 123, and histidine 125 each coordinate Cu cation. A glycan (N-linked (GlcNAc...) asparagine) is linked at asparagine 257. One can recognise a Plastocyanin-like 2 domain in the interval 270 to 372 (TPSSVEPPVI…MSVYAILSYV (103 aa)). Residues asparagine 403, asparagine 443, and asparagine 486 are each glycosylated (N-linked (GlcNAc...) asparagine). A Plastocyanin-like 3 domain is found at 463-602 (STPLLFEPDP…MGGMALALLD (140 aa)). Cu cation contacts are provided by histidine 508, histidine 511, and histidine 513. Asparagine 531 and asparagine 546 each carry an N-linked (GlcNAc...) asparagine glycan. Cu cation-binding residues include histidine 585, cysteine 586, histidine 587, and histidine 591.

It belongs to the multicopper oxidase family. It depends on Cu cation as a cofactor.

Its subcellular location is the secreted. It carries out the reaction 4 hydroquinone + O2 = 4 benzosemiquinone + 2 H2O. Functionally, required for the conversion of the yellow polyketide pigment synthesized by wA to the conidial green pigment. This Emericella nidulans (strain FGSC A4 / ATCC 38163 / CBS 112.46 / NRRL 194 / M139) (Aspergillus nidulans) protein is Laccase-1 (yA).